A 305-amino-acid chain; its full sequence is 2-aminophenol 1,6-dioxygenase beta subunit (305 aa).

The Fe cation site is built by histidine 14, histidine 63, and histidine 196.

The protein belongs to the LigB/MhpB extradiol dioxygenase family. Heterotetramer of 2 alpha and 2 beta subunits. The cofactor is Fe(2+).

The enzyme catalyses 2-aminophenol + O2 = 2-aminomuconate 6-semialdehyde. Strongly inhibited by CuSO(4), FeCl(3), K(3)[Fe(CN)(6)], AgNO3, HgCl(2) and MnCl(2). Its function is as follows. Component of the 2-aminophenol 1,6-dioxygenase complex that catalyzes the ring fission of 2-aminophenol to produce 2-aminomuconic 6-semialdehyde. AmnB seems to be the catalytic subunit of the complex. The enzyme is also active toward 2-amino-p-cresol, 6-amino-m-cresol, 2-amino-m-cresol, 2-amino-4,5-dimethylphenol, 2-amino-4-chlorophenol, and catechol. The protein is 2-aminophenol 1,6-dioxygenase beta subunit (amnB) of Pseudomonas sp.